The sequence spans 168 residues: Thioredoxin Y, chloroplastic (168 aa).

The transit peptide at methionine 1–arginine 58 directs the protein to the chloroplast. Positions valine 59–glutamate 165 constitute a Thioredoxin domain. Active-site nucleophile residues include cysteine 89 and cysteine 92. Cysteines 89 and 92 form a disulfide.

It belongs to the thioredoxin family. Plant Y-type subfamily.

It localises to the plastid. The protein resides in the chloroplast. Functionally, probable thiol-disulfide oxidoreductase that may participate in various redox reactions. The polypeptide is Thioredoxin Y, chloroplastic (Oryza sativa subsp. japonica (Rice)).